A 638-amino-acid polypeptide reads, in one-letter code: Threonine--tRNA ligase 2 (638 aa).

Residues 1-64 (MSKHVHIQLP…EEDAELSIVT (64 aa)) form the TGS domain. The interval 245–535 (DHRKLGKQLG…LIEHYGGAFP (291 aa)) is catalytic. The Zn(2+) site is built by C336, H387, and H512.

It belongs to the class-II aminoacyl-tRNA synthetase family. Homodimer. Zn(2+) is required as a cofactor.

Its subcellular location is the cytoplasm. The catalysed reaction is tRNA(Thr) + L-threonine + ATP = L-threonyl-tRNA(Thr) + AMP + diphosphate + H(+). Its function is as follows. Catalyzes the attachment of threonine to tRNA(Thr) in a two-step reaction: L-threonine is first activated by ATP to form Thr-AMP and then transferred to the acceptor end of tRNA(Thr). Also edits incorrectly charged L-seryl-tRNA(Thr). The polypeptide is Threonine--tRNA ligase 2 (thrZ) (Bacillus subtilis (strain 168)).